A 586-amino-acid chain; its full sequence is Acyl-coenzyme A synthetase ACSM3, mitochondrial (586 aa).

Residues 1-27 constitute a mitochondrion transit peptide; the sequence is MLACVTMKMLRHAKCFQRLAIFGSVRA. Residues Lys73 and Lys106 each carry the N6-succinyllysine modification. An N6-acetyllysine modification is found at Lys157. Residues 235–243, 374–379, Asp461, Arg476, and Lys572 each bind ATP; these read TSGTSGYPK and EGYGQT.

Belongs to the ATP-dependent AMP-binding enzyme family. It depends on Mg(2+) as a cofactor. Requires Mn(2+) as cofactor.

Its subcellular location is the mitochondrion. The protein localises to the mitochondrion matrix. It carries out the reaction a medium-chain fatty acid + ATP + CoA = a medium-chain fatty acyl-CoA + AMP + diphosphate. The enzyme catalyses propanoate + ATP + CoA = propanoyl-CoA + AMP + diphosphate. The catalysed reaction is butanoate + ATP + CoA = butanoyl-CoA + AMP + diphosphate. It catalyses the reaction 2-methylpropanoate + ATP + CoA = 2-methylpropanoyl-CoA + AMP + diphosphate. It carries out the reaction 2-methylbutanoate + ATP + CoA = 2-methylbutanoyl-CoA + AMP + diphosphate. The enzyme catalyses octanoate + ATP + CoA = octanoyl-CoA + AMP + diphosphate. Its function is as follows. Catalyzes the activation of fatty acids by CoA to produce an acyl-CoA, the first step in fatty acid metabolism. Capable of activating medium-chain fatty acids with a preference for isobutyrate among fatty acids with 2-6 carbon atoms. The polypeptide is Acyl-coenzyme A synthetase ACSM3, mitochondrial (ACSM3) (Pongo abelii (Sumatran orangutan)).